Consider the following 644-residue polypeptide: Threonine--tRNA ligase (644 aa).

The TGS domain maps to 3-64 (EMIRITFPDG…QEDGSISIIT (62 aa)). Residues 245–542 (DHRKLGKELE…LIEEYKGAFP (298 aa)) form a catalytic region. Zn(2+) contacts are provided by C338, H389, and H519.

It belongs to the class-II aminoacyl-tRNA synthetase family. As to quaternary structure, homodimer. Zn(2+) is required as a cofactor.

The protein resides in the cytoplasm. It carries out the reaction tRNA(Thr) + L-threonine + ATP = L-threonyl-tRNA(Thr) + AMP + diphosphate + H(+). In terms of biological role, catalyzes the attachment of threonine to tRNA(Thr) in a two-step reaction: L-threonine is first activated by ATP to form Thr-AMP and then transferred to the acceptor end of tRNA(Thr). Also edits incorrectly charged L-seryl-tRNA(Thr). The chain is Threonine--tRNA ligase from Geobacillus sp. (strain WCH70).